The sequence spans 486 residues: Maintenance of mitochondrial morphology protein 1 (486 aa).

Over 1–23 the chain is Lumenal; sequence MSQHSQYDAPGVPVQPSLSFTQG. A helical transmembrane segment spans residues 24–44; it reads FLLGQLSVVLLIGAFIKFFIF. Residues 45–486 are Cytoplasmic-facing; the sequence is GEAPAPPSRG…PGSMPGGRAQ (442 aa). Positions 52 to 103 are disordered; sequence SRGLASRTASHHRSYSINQGDNNVSNNNTSGGSPRTLCEKPSTSNVLRPVPS. Over residues 67–84 the composition is skewed to low complexity; it reads SINQGDNNVSNNNTSGGS. Residues 92–103 are compositionally biased toward polar residues; sequence PSTSNVLRPVPS. Residues 140–389 enclose the SMP-LTD domain; sequence QPESLDWFNV…EPRVQVVGLP (250 aa). Low complexity predominate over residues 413 to 426; that stretch reads AAASASSRGGAPEA. Residues 413 to 486 are disordered; that stretch reads AAASASSRGG…PGSMPGGRAQ (74 aa).

The protein belongs to the MMM1 family. In terms of assembly, homodimer. Component of the ER-mitochondria encounter structure (ERMES) or MDM complex, composed of mmm1, mdm10, mdm12 and mdm34. A mmm1 homodimer associates with one molecule of mdm12 on each side in a pairwise head-to-tail manner, and the SMP-LTD domains of mmm1 and mdm12 generate a continuous hydrophobic tunnel for phospholipid trafficking.

The protein localises to the endoplasmic reticulum membrane. Component of the ERMES/MDM complex, which serves as a molecular tether to connect the endoplasmic reticulum (ER) and mitochondria. Components of this complex are involved in the control of mitochondrial shape and protein biogenesis, and function in nonvesicular lipid trafficking between the ER and mitochondria. The mdm12-mmm1 subcomplex functions in the major beta-barrel assembly pathway that is responsible for biogenesis of all outer membrane beta-barrel proteins, and acts in a late step after the SAM complex. The mdm10-mdm12-mmm1 subcomplex further acts in the TOM40-specific pathway after the action of the mdm12-mmm1 complex. Essential for establishing and maintaining the structure of mitochondria and maintenance of mtDNA nucleoids. The protein is Maintenance of mitochondrial morphology protein 1 of Talaromyces marneffei (strain ATCC 18224 / CBS 334.59 / QM 7333) (Penicillium marneffei).